Here is an 88-residue protein sequence, read N- to C-terminus: Large ribosomal subunit protein bL27 (88 aa).

Residues 1–24 (MAHKKGTGSTRNGRDSNAKRLGVK) are disordered.

Belongs to the bacterial ribosomal protein bL27 family.

This is Large ribosomal subunit protein bL27 from Synechococcus sp. (strain CC9605).